We begin with the raw amino-acid sequence, 538 residues long: MGNCCGTAGSLAQNDNKPKKGRKKQNPFSIDYGLHHGGGDGGGRPLKLIVLNDPTGREIESKYTLGRELGRGEFGVTYLCTDKETDDVFACKSILKKKLRTAVDIEDVRREVEIMRHMPEHPNVVTLKETYEDEHAVHLVMELCEGGELFDRIVARGHYTERAAAAVTKTIMEVVQVCHKHGVMHRDLKPENFLFGNKKETAPLKAIDFGLSVFFKPGERFNEIVGSPYYMAPEVLKRNYGPEVDIWSAGVILYILLCGVPPFWAETEQGVAQAIIRSVLDFRRDPWPKVSENAKDLIRKMLDPDQKRRLTAQQVLDHPWLQNAKTAPNVSLGETVRARLKQFTVMNKLKKRALRVIAEHLSDEEASGIREGFQIMDTSQRGKINIDELKIGLQKLGHAIPQDDLQILMDAGDIDRDGYLDCDEFIAISVHLRKMGNDEHLKKAFAFFDQNNNGYIEIEELREALSDELGTSEEVVDAIIRDVDTDKDGRISYEEFVTMMKTGTDWRKASRQYSRERFNSISLKLMQDASLQVNGDTR.

The tract at residues 1 to 37 is disordered; the sequence is MGNCCGTAGSLAQNDNKPKKGRKKQNPFSIDYGLHHG. The N-myristoyl glycine moiety is linked to residue Gly-2. Residues 63 to 321 form the Protein kinase domain; the sequence is YTLGRELGRG…AQQVLDHPWL (259 aa). Residues 69 to 77 and Lys-92 each bind ATP; that span reads LGRGEFGVT. The Proton acceptor role is filled by Asp-187. Residue Ser-227 is modified to Phosphoserine. The autoinhibitory domain stretch occupies residues 327-357; sequence APNVSLGETVRARLKQFTVMNKLKKRALRVI. 4 EF-hand domains span residues 364 to 399, 400 to 435, 436 to 470, and 471 to 506; these read EEAS…LGHA, IPQD…LRKM, GNDE…DELG, and TSEE…GTDW. Asp-377, Ser-379, Lys-383, Glu-388, Asp-413, Asp-415, Asp-417, Tyr-419, Glu-424, Asp-449, Asn-451, Asn-453, Tyr-455, Glu-460, Asp-484, Asp-486, Asp-488, and Arg-490 together coordinate Ca(2+). At Ser-492 the chain carries Phosphoserine. Glu-495 contributes to the Ca(2+) binding site.

This sequence belongs to the protein kinase superfamily. Ser/Thr protein kinase family. CDPK subfamily. As to quaternary structure, interacts with ABF4. Interacts with CNGC18. As to expression, expressed in embryos and most of the vegetative tissues.

The protein localises to the nucleus. Its subcellular location is the membrane. The catalysed reaction is L-seryl-[protein] + ATP = O-phospho-L-seryl-[protein] + ADP + H(+). It carries out the reaction L-threonyl-[protein] + ATP = O-phospho-L-threonyl-[protein] + ADP + H(+). Activated by calcium. Autophosphorylation may play an important role in the regulation of the kinase activity. Its function is as follows. May play a role in signal transduction pathways that involve calcium as a second messenger. Involved in maintaining Ca2+ homeostasis in pollen tube tips by regulating CNGC18. Functions as regulator of the calcium-mediated abscisic acid (ABA) signaling pathway. Phosphorylates ABA-responsive transcription factor ABF4 in vitro. The chain is Calcium-dependent protein kinase 32 from Arabidopsis thaliana (Mouse-ear cress).